The chain runs to 206 residues: Ras-related protein RABG3d (206 aa).

Residue G15 to T22 coordinates GTP. The Effector region signature appears at Y37–F45. Residues D63–Q67, N125–D128, and S158–A159 contribute to the GTP site. 2 S-geranylgeranyl cysteine lipidation sites follow: C204 and C206. A Cysteine methyl ester modification is found at C206.

Belongs to the small GTPase superfamily. Rab family.

The protein localises to the cell membrane. Functionally, intracellular vesicle trafficking and protein transport. This chain is Ras-related protein RABG3d (RABG3D), found in Arabidopsis thaliana (Mouse-ear cress).